Consider the following 882-residue polypeptide: DNA mismatch repair protein MutS (882 aa).

An ATP-binding site is contributed by 627 to 634 (GPNMAGKS).

The protein belongs to the DNA mismatch repair MutS family.

Its function is as follows. This protein is involved in the repair of mismatches in DNA. It is possible that it carries out the mismatch recognition step. This protein has a weak ATPase activity. The polypeptide is DNA mismatch repair protein MutS (Anaeromyxobacter dehalogenans (strain 2CP-C)).